A 348-amino-acid polypeptide reads, in one-letter code: Rhodopsin (348 aa).

The residue at position 1 (M1) is an N-acetylmethionine. Residues 1 to 36 are Extracellular-facing; that stretch reads MNGTEGPNFYVPFSNATGVVRSPFEYPQYYLAEPWQ. 2 N-linked (GlcNAc...) asparagine glycosylation sites follow: N2 and N15. The chain crosses the membrane as a helical span at residues 37–61; that stretch reads FSMLAAYMFLLIVLGFPINFLTLYV. Topologically, residues 62–73 are cytoplasmic; that stretch reads TVQHKKLRTPLN. A helical membrane pass occupies residues 74-96; it reads YILLNLAVADLFMVLGGFTSTLY. Residues 97 to 110 are Extracellular-facing; sequence TSLHGYFVFGPTGC. C110 and C187 form a disulfide bridge. A helical membrane pass occupies residues 111 to 133; the sequence is NLEGFFATLGGEIALWSLVVLAI. The 'Ionic lock' involved in activated form stabilization signature appears at 134-136; that stretch reads ERY. Residues 134–152 are Cytoplasmic-facing; sequence ERYVVVCKPMSNFRFGENH. A helical transmembrane segment spans residues 153–173; it reads AIMGVAFTWVMALACAAPPLA. Topologically, residues 174–202 are extracellular; that stretch reads GWSRYIPEGLQCSCGIDYYTLKPEVNNES. E201 is a Zn(2+) binding site. The helical transmembrane segment at 203-224 threads the bilayer; sequence FVIYMFVVHFTIPMIIIFFCYG. Residues 225–252 lie on the Cytoplasmic side of the membrane; sequence QLVFTVKEAAAQQQESATTQKAEKEVTR. Residues 253–274 traverse the membrane as a helical segment; that stretch reads MVIIMVIAFLICWVPYASVAFY. Residues 275–284 are Extracellular-facing; sequence IFTHQGSNFG. Q279 provides a ligand contact to Zn(2+). A helical transmembrane segment spans residues 285-309; the sequence is PIFMTIPAFFAKSAAIYNPVIYIMM. Residue K296 is modified to N6-(retinylidene)lysine. Topologically, residues 310–348 are cytoplasmic; the sequence is NKQFRNCMLTTICCGKNPLGDDEASATVSKTETSQVAPA. S-palmitoyl cysteine attachment occurs at residues C322 and C323. The tract at residues 330-348 is interaction with SAG; it reads DDEASATVSKTETSQVAPA. Position 334 is a phosphoserine (S334). T336 is modified (phosphothreonine). At S338 the chain carries Phosphoserine. A phosphothreonine mark is found at T340 and T342. A Phosphoserine modification is found at S343.

Belongs to the G-protein coupled receptor 1 family. Opsin subfamily. As to quaternary structure, homodimer. May form a complex composed of RHO, GRK1 and RCVRN in a Ca(2+)-dependent manner; RCVRN prevents the interaction between GRK1 and RHO. Interacts with GRK1. Interacts (phosphorylated form) with SAG. Interacts with GNAT1. Interacts with GNAT3. SAG and G-proteins compete for a common binding site. Interacts with PRCD; the interaction promotes PRCD stability. Forms a complex with ASAP1 and ARF4. Forms a complex with ASAP1, RAB11A, Rabin8/RAB3IP, ARF4 and RAB11FIP3; the complex regulates Golgi-to-cilia rhodopsin/RHO transport in photoreceptors. Post-translationally, phosphorylated on some or all of the serine and threonine residues present in the C-terminal region. After activation by light, phosphorylated by GRK1 (in vitro). In terms of processing, contains one covalently linked retinal chromophore. Upon light absorption, the covalently bound 11-cis-retinal is converted to all-trans-retinal. After hydrolysis of the Schiff base and release of the covalently bound all-trans-retinal, active rhodopsin is regenerated by binding of a fresh molecule of 11-cis-retinal. As to expression, rod shaped photoreceptor cells which mediate vision in dim light.

Its subcellular location is the membrane. The protein localises to the cell projection. It is found in the cilium. The protein resides in the photoreceptor outer segment. Its function is as follows. Photoreceptor required for image-forming vision at low light intensity. Required for photoreceptor cell viability after birth. Light-induced isomerization of the chromophore 11-cis-retinal to all-trans-retinal triggers a conformational change that activates signaling via G-proteins. Subsequent receptor phosphorylation mediates displacement of the bound G-protein alpha subunit by the arrestin SAG and terminates signaling. The polypeptide is Rhodopsin (RHO) (Homo sapiens (Human)).